Reading from the N-terminus, the 267-residue chain is Dichloromethane dehalogenase (267 aa).

The GST N-terminal domain maps to 3–85 (TKLRYLHHPA…YLSEKYDCSS (83 aa)). Residues 91–224 (TLEERGHIQQ…AWQYENVRKY (134 aa)) enclose the GST C-terminal domain.

It belongs to the GST superfamily. Homohexamer.

The protein localises to the cytoplasm. It catalyses the reaction dichloromethane + H2O = formaldehyde + 2 chloride + 2 H(+). It functions in the pathway xenobiotic degradation; dichloromethane degradation. This chain is Dichloromethane dehalogenase (dcmA), found in Methylophilus leisingeri (strain DSM 6813 / VKM B-2013 / DM11).